The chain runs to 86 residues: Small ribosomal subunit protein bS20 (86 aa).

Belongs to the bacterial ribosomal protein bS20 family.

Binds directly to 16S ribosomal RNA. This chain is Small ribosomal subunit protein bS20, found in Buchnera aphidicola subsp. Cinara cedri (strain Cc).